A 200-amino-acid chain; its full sequence is Probable molybdenum cofactor guanylyltransferase (200 aa).

Residues 9-11, K21, D69, and D100 each bind GTP; that span reads LAG. D100 serves as a coordination point for Mg(2+).

This sequence belongs to the MobA family. Requires Mg(2+) as cofactor.

The protein localises to the cytoplasm. The catalysed reaction is Mo-molybdopterin + GTP + H(+) = Mo-molybdopterin guanine dinucleotide + diphosphate. Functionally, transfers a GMP moiety from GTP to Mo-molybdopterin (Mo-MPT) cofactor (Moco or molybdenum cofactor) to form Mo-molybdopterin guanine dinucleotide (Mo-MGD) cofactor. In Bacillus mycoides (strain KBAB4) (Bacillus weihenstephanensis), this protein is Probable molybdenum cofactor guanylyltransferase.